The chain runs to 195 residues: Peroxiredoxin (195 aa).

The Thioredoxin domain maps to 4 to 162 (AMIGKPAPEF…TLRLVQAFQF (159 aa)). The active-site Cysteine sulfenic acid (-SOH) intermediate is the Cys49.

This sequence belongs to the peroxiredoxin family. AhpC/Prx1 subfamily. Homodimer; disulfide-linked, upon oxidation.

The enzyme catalyses a hydroperoxide + [thioredoxin]-dithiol = an alcohol + [thioredoxin]-disulfide + H2O. Thiol-specific peroxidase that catalyzes the reduction of hydrogen peroxide and organic hydroperoxides to water and alcohols, respectively. Plays a role in cell protection against oxidative stress by detoxifying peroxides and as sensor of hydrogen peroxide-mediated signaling events. This is Peroxiredoxin from Ascaris suum (Pig roundworm).